Here is a 481-residue protein sequence, read N- to C-terminus: uncharacterized protein (481 aa).

This sequence to M.tuberculosis RV2411c.

This is an uncharacterized protein from Synechocystis sp. (strain ATCC 27184 / PCC 6803 / Kazusa).